The following is a 359-amino-acid chain: tRNA N6-adenosine threonylcarbamoyltransferase (359 aa).

Fe cation-binding residues include His115 and His119. Substrate is bound by residues 137–141 (LVSGG), Asp170, Gly183, and Asn283. Asp311 provides a ligand contact to Fe cation. A disordered region spans residues 328 to 359 (APDSLDIAPRSRWPLDEKSAPVFGTGRRGAKA).

Belongs to the KAE1 / TsaD family. The cofactor is Fe(2+).

Its subcellular location is the cytoplasm. It carries out the reaction L-threonylcarbamoyladenylate + adenosine(37) in tRNA = N(6)-L-threonylcarbamoyladenosine(37) in tRNA + AMP + H(+). Its function is as follows. Required for the formation of a threonylcarbamoyl group on adenosine at position 37 (t(6)A37) in tRNAs that read codons beginning with adenine. Is involved in the transfer of the threonylcarbamoyl moiety of threonylcarbamoyl-AMP (TC-AMP) to the N6 group of A37, together with TsaE and TsaB. TsaD likely plays a direct catalytic role in this reaction. This is tRNA N6-adenosine threonylcarbamoyltransferase from Brucella abortus (strain S19).